Here is a 711-residue protein sequence, read N- to C-terminus: Polyribonucleotide nucleotidyltransferase (711 aa).

Mg(2+) is bound by residues aspartate 486 and aspartate 492. Residues 553-612 enclose the KH domain; that stretch reads PRIHTIKINPDKIKDVIGKGGSVIRALTEETGTTIEIEDDGTVKIAATDGEKAKHAIRRI. Residues 622-690 form the S1 motif domain; the sequence is GRVYTGKVTR…RQGRIRLSIK (69 aa). Residues 689–711 are disordered; it reads IKEATEQSQPAAAPEAPAAEQGE. A compositionally biased stretch (low complexity) spans 694–711; it reads EQSQPAAAPEAPAAEQGE.

This sequence belongs to the polyribonucleotide nucleotidyltransferase family. In terms of assembly, component of the RNA degradosome, which is a multiprotein complex involved in RNA processing and mRNA degradation. It depends on Mg(2+) as a cofactor.

The protein localises to the cytoplasm. The catalysed reaction is RNA(n+1) + phosphate = RNA(n) + a ribonucleoside 5'-diphosphate. Functionally, involved in mRNA degradation. Catalyzes the phosphorolysis of single-stranded polyribonucleotides processively in the 3'- to 5'-direction. In Escherichia coli (strain ATCC 8739 / DSM 1576 / NBRC 3972 / NCIMB 8545 / WDCM 00012 / Crooks), this protein is Polyribonucleotide nucleotidyltransferase.